Here is a 231-residue protein sequence, read N- to C-terminus: Uracil-DNA glycosylase (231 aa).

Asp74 acts as the Proton acceptor in catalysis.

This sequence belongs to the uracil-DNA glycosylase (UDG) superfamily. UNG family.

It localises to the cytoplasm. The enzyme catalyses Hydrolyzes single-stranded DNA or mismatched double-stranded DNA and polynucleotides, releasing free uracil.. Functionally, excises uracil residues from the DNA which can arise as a result of misincorporation of dUMP residues by DNA polymerase or due to deamination of cytosine. The polypeptide is Uracil-DNA glycosylase (Campylobacter jejuni (strain RM1221)).